Here is a 401-residue protein sequence, read N- to C-terminus: Dual-specificity RNA methyltransferase RlmN (401 aa).

Glu114 acts as the Proton acceptor in catalysis. Residues 120 to 365 (DKGRGTLCVS…TMVRRTRGDD (246 aa)) form the Radical SAM core domain. Cys127 and Cys370 are oxidised to a cystine. Residues Cys134, Cys138, and Cys141 each coordinate [4Fe-4S] cluster. S-adenosyl-L-methionine-binding positions include 187–188 (GE), Ser219, 241–243 (SLH), and Asn327. Cys370 functions as the S-methylcysteine intermediate in the catalytic mechanism.

Belongs to the radical SAM superfamily. RlmN family. The cofactor is [4Fe-4S] cluster.

It localises to the cytoplasm. The enzyme catalyses adenosine(2503) in 23S rRNA + 2 reduced [2Fe-2S]-[ferredoxin] + 2 S-adenosyl-L-methionine = 2-methyladenosine(2503) in 23S rRNA + 5'-deoxyadenosine + L-methionine + 2 oxidized [2Fe-2S]-[ferredoxin] + S-adenosyl-L-homocysteine. The catalysed reaction is adenosine(37) in tRNA + 2 reduced [2Fe-2S]-[ferredoxin] + 2 S-adenosyl-L-methionine = 2-methyladenosine(37) in tRNA + 5'-deoxyadenosine + L-methionine + 2 oxidized [2Fe-2S]-[ferredoxin] + S-adenosyl-L-homocysteine. Its function is as follows. Specifically methylates position 2 of adenine 2503 in 23S rRNA and position 2 of adenine 37 in tRNAs. m2A2503 modification seems to play a crucial role in the proofreading step occurring at the peptidyl transferase center and thus would serve to optimize ribosomal fidelity. This chain is Dual-specificity RNA methyltransferase RlmN, found in Xanthomonas campestris pv. campestris (strain 8004).